Here is a 512-residue protein sequence, read N- to C-terminus: Phosphotransferase UL97 homolog (512 aa).

The active-site Proton acceptor is the aspartate 274.

Belongs to the protein kinase superfamily. Tyr protein kinase family.

It carries out the reaction L-tyrosyl-[protein] + ATP = O-phospho-L-tyrosyl-[protein] + ADP + H(+). The sequence is that of Phosphotransferase UL97 homolog from Elephantid herpesvirus 1 (isolate Asian elephant/Berlin/Kiba/1998) (EIHV-1).